The sequence spans 487 residues: Cobyric acid synthase (487 aa).

Positions 249–435 (GIDIAIVRLP…IHGIFDEGDF (187 aa)) constitute a GATase cobBQ-type domain. C330 (nucleophile) is an active-site residue. H427 is a catalytic residue.

Belongs to the CobB/CobQ family. CobQ subfamily.

Its pathway is cofactor biosynthesis; adenosylcobalamin biosynthesis. Catalyzes amidations at positions B, D, E, and G on adenosylcobyrinic A,C-diamide. NH(2) groups are provided by glutamine, and one molecule of ATP is hydrogenolyzed for each amidation. The sequence is that of Cobyric acid synthase from Clostridium perfringens (strain ATCC 13124 / DSM 756 / JCM 1290 / NCIMB 6125 / NCTC 8237 / Type A).